The following is a 447-amino-acid chain: T-DNA border endonuclease VirD2 (447 aa).

2 disordered regions span residues 214 to 265 (ADLE…QEPA) and 300 to 447 (SGSS…GNRR). Residues 251 to 260 (NNRQNESQVH) are compositionally biased toward polar residues. Over residues 390-406 (TATTRASTATDSLSATA) the composition is skewed to low complexity. Residues 427 to 447 (PSERKRERDERSKDGRGGNRR) are compositionally biased toward basic and acidic residues.

Functionally, tumor formation by A.tumefaciens involves the transfer and integration of a defined segment (T-DNA) of Ti plasmid DNA into the plant nuclear genome. The virD operon encodes a site-specific endonuclease that cleaves at a unique site within both 24 bp direct repeats flanking the T-DNA. The sequence is that of T-DNA border endonuclease VirD2 (virD2) from Agrobacterium fabrum (strain C58 / ATCC 33970) (Agrobacterium tumefaciens (strain C58)).